The chain runs to 467 residues: Ribosomal protein uS12 methylthiotransferase RimO (467 aa).

The interval 1–27 (MTSNPPDLRPDLAPKPTFGTAPRPDQP) is disordered. Positions 27-137 (PTLGMVSLGC…VLDAVHAAVP (111 aa)) constitute an MTTase N-terminal domain. [4Fe-4S] cluster-binding residues include C36, C72, C101, C168, C172, and C175. A Radical SAM core domain is found at 154-397 (LTPRHFSYLK…MEKAQAISEA (244 aa)). The 68-residue stretch at 400 to 467 (ASKVGQTLQV…GEYDLWGALR (68 aa)) folds into the TRAM domain.

It belongs to the methylthiotransferase family. RimO subfamily. The cofactor is [4Fe-4S] cluster.

The protein localises to the cytoplasm. The catalysed reaction is L-aspartate(89)-[ribosomal protein uS12]-hydrogen + (sulfur carrier)-SH + AH2 + 2 S-adenosyl-L-methionine = 3-methylsulfanyl-L-aspartate(89)-[ribosomal protein uS12]-hydrogen + (sulfur carrier)-H + 5'-deoxyadenosine + L-methionine + A + S-adenosyl-L-homocysteine + 2 H(+). Its function is as follows. Catalyzes the methylthiolation of an aspartic acid residue of ribosomal protein uS12. This chain is Ribosomal protein uS12 methylthiotransferase RimO, found in Ruegeria sp. (strain TM1040) (Silicibacter sp.).